The primary structure comprises 181 residues: Adenine phosphoribosyltransferase (181 aa).

The protein belongs to the purine/pyrimidine phosphoribosyltransferase family. In terms of assembly, homodimer.

Its subcellular location is the cytoplasm. The catalysed reaction is AMP + diphosphate = 5-phospho-alpha-D-ribose 1-diphosphate + adenine. The protein operates within purine metabolism; AMP biosynthesis via salvage pathway; AMP from adenine: step 1/1. In terms of biological role, catalyzes a salvage reaction resulting in the formation of AMP, that is energically less costly than de novo synthesis. The protein is Adenine phosphoribosyltransferase of Shewanella woodyi (strain ATCC 51908 / MS32).